The sequence spans 336 residues: Zinc finger protein GFI1 homolog pag-3 (336 aa).

5 consecutive C2H2-type zinc fingers follow at residues 126 to 148, 154 to 176, 182 to 204, 210 to 232, and 238 to 260; these read FHCQ…QQVH, FECK…LLIH, YPCE…TYIH, HKCT…TRKH, and FACD…RESH. Residues 253 to 290 are disordered; sequence RRRHRESHHPGHPEECVSASQISSDLSPKGYMTPPTSN.

May interact with transcription factor unc-3. In terms of tissue distribution, expressed in the BDU neurons, the touch neurons, the VA, VB and VC motor neurons, two AVF interneurons and unidentified neurons of the retrovesicular ganglion (at protein level).

The protein localises to the nucleus. The protein resides in the cell projection. It is found in the axon. It localises to the perikaryon. Transcription factor. Plays a role in the determination of neuroblast cell fate and neuronal differentiation. Negatively modulates expression of several components of dense-core vesicles (DCVs), thereby, in a DCV membrane protein ida-1-dependent manner, regulating neurosecretion. Negatively modulates the transcription of its own gene, the mechanosensory gene mec-3, and also other touch neuron-specific genes in the BDU neurons; required for coordinated movement. Required to determine the identity of BDU sensory neurons in concert with transcription factor unc-86, regulating expression of a number of genes, including transcription factors ceh-14 and ahr-1, neuropeptides flp-10, nlp-1 and nlp-15, and tyramine receptor-encoding ser-2. Acts in concert with non-canonical WNT signaling to negatively modulate transcription of mec-3 gene in BDU neurons. May act in concert with transcription factor unc-3 in motor neuron fate determination. May play a role programmed cell death. This Caenorhabditis elegans protein is Zinc finger protein GFI1 homolog pag-3.